Here is a 225-residue protein sequence, read N- to C-terminus: GTP cyclohydrolase III (225 aa).

This sequence belongs to the archaeal-type GTP cyclohydrolase family.

The catalysed reaction is GTP + 3 H2O = 2-amino-5-formylamino-6-(5-phospho-D-ribosylamino)pyrimidin-4(3H)-one + 2 phosphate + 2 H(+). Functionally, catalyzes the formation of 2-amino-5-formylamino-6-ribofuranosylamino-4(3H)-pyrimidinone ribonucleotide monophosphate and inorganic phosphate from GTP. Also has an independent pyrophosphate phosphohydrolase activity. This Sulfurisphaera tokodaii (strain DSM 16993 / JCM 10545 / NBRC 100140 / 7) (Sulfolobus tokodaii) protein is GTP cyclohydrolase III.